The primary structure comprises 281 residues: Large ribosomal subunit protein uL2 (281 aa).

Residues 223 to 281 (VRGSVMNPVDHPHGGGEGKQPVGRKSPLTPWGKIALGVKTRKTKKSSNKLILRRRKDAK) form a disordered region. Residues 261–281 (KTRKTKKSSNKLILRRRKDAK) show a composition bias toward basic residues.

The protein belongs to the universal ribosomal protein uL2 family. In terms of assembly, part of the 50S ribosomal subunit. Forms a bridge to the 30S subunit in the 70S ribosome.

In terms of biological role, one of the primary rRNA binding proteins. Required for association of the 30S and 50S subunits to form the 70S ribosome, for tRNA binding and peptide bond formation. It has been suggested to have peptidyltransferase activity; this is somewhat controversial. Makes several contacts with the 16S rRNA in the 70S ribosome. The sequence is that of Large ribosomal subunit protein uL2 from Mycoplasmopsis synoviae (strain 53) (Mycoplasma synoviae).